Reading from the N-terminus, the 173-residue chain is PRKR-interacting protein 1 homolog (173 aa).

Disordered regions lie at residues 1–59 and 117–173; these read MAKE…PRSA and MLEE…LEDQ. The segment covering 26-42 has biased composition (basic and acidic residues); it reads ATDEQRLKLERLMRNPD. A required for RNA-binding region spans residues 50 to 142; it reads RPKEWSPRSA…LKEKKKMCKK (93 aa). A coiled-coil region spans residues 99–150; the sequence is SEKQRLDEEYKKKLIQNKMLEEERTAKRRLKRQKLKEKKKMCKKGKKEEKKE. Residues 124 to 143 are compositionally biased toward basic residues; the sequence is AKRRLKRQKLKEKKKMCKKG. A required for nuclear localization region spans residues 125-137; it reads KRRLKRQKLKEKK. Basic and acidic residues predominate over residues 144-173; it reads KKEEKKEDKDGHTDPENSAESSDKSDLEDQ.

This sequence belongs to the PRKRIP1 family. As to quaternary structure, component of the pre-catalytic and post-catalytic spliceosome complexes.

It is found in the nucleus. It localises to the nucleolus. Functionally, required for pre-mRNA splicing as component of the spliceosome. Binds double-stranded RNA. This is PRKR-interacting protein 1 homolog (prkrip1) from Xenopus laevis (African clawed frog).